The following is a 421-amino-acid chain: Gamma-glutamyl phosphate reductase (421 aa).

It belongs to the gamma-glutamyl phosphate reductase family.

It is found in the cytoplasm. The catalysed reaction is L-glutamate 5-semialdehyde + phosphate + NADP(+) = L-glutamyl 5-phosphate + NADPH + H(+). It functions in the pathway amino-acid biosynthesis; L-proline biosynthesis; L-glutamate 5-semialdehyde from L-glutamate: step 2/2. Catalyzes the NADPH-dependent reduction of L-glutamate 5-phosphate into L-glutamate 5-semialdehyde and phosphate. The product spontaneously undergoes cyclization to form 1-pyrroline-5-carboxylate. The polypeptide is Gamma-glutamyl phosphate reductase (Pseudomonas paraeruginosa (strain DSM 24068 / PA7) (Pseudomonas aeruginosa (strain PA7))).